We begin with the raw amino-acid sequence, 585 residues long: Amyloid protein-binding protein 2 (585 aa).

TPR repeat units follow at residues Q50–F83, I120–H153, A206–G239, S288–V321, H333–I367, A429–L462, A471–L505, and E514–R547.

In terms of assembly, component of a CRL2 E3 ubiquitin-protein ligase complex, also named ECS (Elongin BC-CUL2/5-SOCS-box protein) complex, composed of CUL2, Elongin BC (ELOB and ELOC), RBX1 and substrate-specific adapter APPBP2. Interacts with APP; APP interaction inhibits the E3 ubiquitin-protein ligase activity of the CRL2(APPBP2) complex. Rapidly degraded by the proteasome upon overexpression of a C-terminal fragment of APP.

The protein resides in the nucleus. It is found in the cytoplasm. Its subcellular location is the cytoskeleton. The protein localises to the membrane. The protein operates within protein modification; protein ubiquitination. With respect to regulation, E3 ubiquitin-protein ligase activity of the CRL2(APPBP2) complex is inhibited by APP. In terms of biological role, substrate-recognition component of a Cul2-RING (CRL2) E3 ubiquitin-protein ligase complex of the DesCEND (destruction via C-end degrons) pathway, which recognizes a C-degron located at the extreme C terminus of target proteins, leading to their ubiquitination and degradation. The C-degron recognized by the DesCEND pathway is usually a motif of less than ten residues and can be present in full-length proteins, truncated proteins or proteolytically cleaved forms. The CRL2(APPBP2) complex specifically recognizes proteins with a -Arg-Xaa-Xaa-Gly degron at the C-terminus, leading to their ubiquitination and degradation. The CRL2(APPBP2) complex mediates ubiquitination and degradation of truncated SELENOV selenoproteins produced by failed UGA/Sec decoding, which end with a -Arg-Xaa-Xaa-Gly degron. May play a role in intracellular protein transport: may be involved in the translocation of APP along microtubules toward the cell surface. In Mus musculus (Mouse), this protein is Amyloid protein-binding protein 2.